The following is an 85-amino-acid chain: ATP synthase subunit 9, mitochondrial (85 aa).

Transmembrane regions (helical) follow at residues 19-39 and 61-81; these read IGAG…GNVF and ILGF…AFLI.

The protein belongs to the ATPase C chain family. As to quaternary structure, F-type ATPases have 2 components, CF(1) - the catalytic core - and CF(0) - the membrane proton channel. CF(1) has five subunits: alpha(3), beta(3), gamma(1), delta(1), epsilon(1). CF(0) has three main subunits: a, b and c.

The protein resides in the mitochondrion membrane. Its function is as follows. This protein is one of the chains of the nonenzymatic membrane component (F0) of mitochondrial ATPase. This chain is ATP synthase subunit 9, mitochondrial (ATP9), found in Arabidopsis thaliana (Mouse-ear cress).